A 514-amino-acid polypeptide reads, in one-letter code: Alstonine synthase (514 aa).

Residues 4–24 (PQFSCLLPAFFLLVVFLFLLI) traverse the membrane as a helical segment. An N-linked (GlcNAc...) asparagine glycan is attached at asparagine 428. Residue cysteine 450 participates in heme binding.

The protein belongs to the cytochrome P450 family. Heme serves as cofactor.

Its subcellular location is the membrane. It carries out the reaction tetrahydroalstonine + A + reduced [NADPH--hemoprotein reductase] + O2 = alstonine + AH2 + oxidized [NADPH--hemoprotein reductase] + 2 H2O + H(+). Its pathway is alkaloid biosynthesis. Functionally, a cytochrome P450 monooxygenase involved in the biosynthesis of pentacyclic alkaloids natural products such as alstonine, putative antipsychotic compounds. Catalyzes the conversion of tetrahydroalstonine to alstonine. No oxidative activity towards ajmalicine. This is Alstonine synthase from Alstonia scholaris (Dogbane).